The primary structure comprises 381 residues: Queuine tRNA-ribosyltransferase (381 aa).

The active-site Proton acceptor is Asp-89. Substrate is bound by residues 89–93, Asp-143, Gln-187, and Gly-214; that span reads DSGGF. The segment at 245 to 251 is RNA binding; sequence GVGKPED. The active-site Nucleophile is the Asp-264. The RNA binding; important for wobble base 34 recognition stretch occupies residues 269 to 273; the sequence is TRNAR. Residues Cys-302, Cys-304, Cys-307, and His-333 each coordinate Zn(2+).

This sequence belongs to the queuine tRNA-ribosyltransferase family. As to quaternary structure, homodimer. Within each dimer, one monomer is responsible for RNA recognition and catalysis, while the other monomer binds to the replacement base PreQ1. Zn(2+) serves as cofactor.

The enzyme catalyses 7-aminomethyl-7-carbaguanine + guanosine(34) in tRNA = 7-aminomethyl-7-carbaguanosine(34) in tRNA + guanine. Its pathway is tRNA modification; tRNA-queuosine biosynthesis. Catalyzes the base-exchange of a guanine (G) residue with the queuine precursor 7-aminomethyl-7-deazaguanine (PreQ1) at position 34 (anticodon wobble position) in tRNAs with GU(N) anticodons (tRNA-Asp, -Asn, -His and -Tyr). Catalysis occurs through a double-displacement mechanism. The nucleophile active site attacks the C1' of nucleotide 34 to detach the guanine base from the RNA, forming a covalent enzyme-RNA intermediate. The proton acceptor active site deprotonates the incoming PreQ1, allowing a nucleophilic attack on the C1' of the ribose to form the product. After dissociation, two additional enzymatic reactions on the tRNA convert PreQ1 to queuine (Q), resulting in the hypermodified nucleoside queuosine (7-(((4,5-cis-dihydroxy-2-cyclopenten-1-yl)amino)methyl)-7-deazaguanosine). The protein is Queuine tRNA-ribosyltransferase of Pectobacterium atrosepticum (strain SCRI 1043 / ATCC BAA-672) (Erwinia carotovora subsp. atroseptica).